The primary structure comprises 284 residues: MLFKSLFVAAATAVGVSGHVAREAPRTFGCGTHEPSAEHVGMSKVLAAQEARVLESGNLTARATINVNVYFHVVAASQTVANGYLTDKMVTDQIAVLNRDFAPHDVAFRLAGTDRTVNTGWARDSNEIAMKRALRKGTYKDLNLYTQVSLTDNALGYAYFPTSGATSGSTTFIRDGVSIKAQTVPGGSQAGFNLGKTGTHEVGHWLGLYHTFQGGCTGSGDQVSDTPAQASFSSGCPIGRDSCPGQAGLDPIHNYMDYSDDSCYEEFTPGQDARIHSFWTTYRA.

Positions 1–18 (MLFKSLFVAAATAVGVSG) are cleaved as a signal peptide. Residue Asn58 is glycosylated (N-linked (GlcNAc...) asparagine). Position 200 (His200) interacts with Zn(2+). Glu201 is an active-site residue. A Zn(2+)-binding site is contributed by His204. Cys236 and Cys263 are oxidised to a cystine.

The protein belongs to the peptidase M43B family.

It localises to the secreted. Functionally, secreted metalloproteinase that allows assimilation of proteinaceous substrates. This chain is Extracellular metalloprotease VDBG_01143, found in Verticillium alfalfae (strain VaMs.102 / ATCC MYA-4576 / FGSC 10136) (Verticillium wilt of alfalfa).